The primary structure comprises 204 residues: MTITIDAVILAGGMARRMGGNDKGLVELESQPMIKHAIDRINPQVKEILINANRNQKVYSEFGFEVISDQDSGYLGPLAGMITAMSHTQADYLMVVPCDCPLLPRDLVNRMLAQLTTADAELAVASDGKREQPVVMLLKPSLRASMKAFLDAGERKIDFWYAKHNYIVTDFSDQPNAFINVNTPEQKQQLSEAIANEKNNLRCK.

GTP contacts are provided by residues 10 to 12 (LAG), Lys23, Asn51, Asp69, and Asp99. Asp99 provides a ligand contact to Mg(2+).

This sequence belongs to the MobA family. As to quaternary structure, monomer. Mg(2+) is required as a cofactor.

The protein localises to the cytoplasm. The enzyme catalyses Mo-molybdopterin + GTP + H(+) = Mo-molybdopterin guanine dinucleotide + diphosphate. Transfers a GMP moiety from GTP to Mo-molybdopterin (Mo-MPT) cofactor (Moco or molybdenum cofactor) to form Mo-molybdopterin guanine dinucleotide (Mo-MGD) cofactor. The protein is Molybdenum cofactor guanylyltransferase of Shewanella piezotolerans (strain WP3 / JCM 13877).